A 404-amino-acid chain; its full sequence is Cysteine desulfurase IscS (404 aa).

Pyridoxal 5'-phosphate is bound by residues 75–76 (AT), Asn155, Gln183, and 203–205 (SAH). N6-(pyridoxal phosphate)lysine is present on Lys206. Residue Thr243 coordinates pyridoxal 5'-phosphate. Cys328 acts as the Cysteine persulfide intermediate in catalysis. A [2Fe-2S] cluster-binding site is contributed by Cys328.

Belongs to the class-V pyridoxal-phosphate-dependent aminotransferase family. NifS/IscS subfamily. As to quaternary structure, homodimer. Forms a heterotetramer with IscU, interacts with other sulfur acceptors. Requires pyridoxal 5'-phosphate as cofactor.

It is found in the cytoplasm. The catalysed reaction is (sulfur carrier)-H + L-cysteine = (sulfur carrier)-SH + L-alanine. Its pathway is cofactor biosynthesis; iron-sulfur cluster biosynthesis. Functionally, master enzyme that delivers sulfur to a number of partners involved in Fe-S cluster assembly, tRNA modification or cofactor biosynthesis. Catalyzes the removal of elemental sulfur atoms from cysteine to produce alanine. Functions as a sulfur delivery protein for Fe-S cluster synthesis onto IscU, an Fe-S scaffold assembly protein, as well as other S acceptor proteins. The sequence is that of Cysteine desulfurase IscS from Aeromonas salmonicida (strain A449).